Consider the following 217-residue polypeptide: Ras-related protein RABA2c (217 aa).

GTP-binding positions include 19 to 27 (GDSGVGKSN), 38 to 44 (CLESKST), 67 to 71 (DTAGQ), 125 to 128 (NKSD), and 155 to 157 (SAL). An Effector region motif is present at residues 41-49 (SKSTIGVEF). The disordered stretch occupies residues 195–217 (PGQGTTINVDDTSGGAKRACCSS). Residues C214 and C215 are each lipidated (S-geranylgeranyl cysteine).

This sequence belongs to the small GTPase superfamily. Rab family. As to expression, expressed in root tips.

It localises to the endosome membrane. It is found in the golgi apparatus. The protein localises to the trans-Golgi network membrane. Intracellular vesicle trafficking and protein transport. In Arabidopsis thaliana (Mouse-ear cress), this protein is Ras-related protein RABA2c (RABA2C).